A 159-amino-acid chain; its full sequence is Cyclin-dependent kinase inhibitor 1 (159 aa).

Serine 2 is modified (N-acetylserine). Residue serine 2 forms a Glycyl serine ester (Ser-Gly) (interchain with G-Cter in ubiquitin) linkage. The segment at 12–40 (HRSKVCRCLFGPVDSEQLRRDCDALMAGC) adopts a C4-type zinc-finger fold. Positions 17 to 24 (CRCLFGPV) are required for binding cyclins. A required for binding CDKs region spans residues 53-58 (VTETPL). Serine 78 is modified (phosphoserine; by NUAK1). The disordered stretch occupies residues 78-106 (SPGSRSRDDLGGDKRPSTSSALLQGPAPE). The span at 82-93 (RSRDDLGGDKRP) shows a compositional bias: basic and acidic residues. Residue serine 112 is modified to Phosphoserine; by GSK3-beta. Residues 118–142 (VSERPEDSPGGPGTSQGRKRRQTSL) are disordered. The residue at position 125 (serine 125) is a Phosphoserine. A PIP-box K+4 motif motif is present at residues 135 to 159 (RKRRQTSLTDFYHSKRRLVFCKRKP). Position 140 is a phosphothreonine; by PKA, PKB/AKT1, PIM1 and PIM2 (threonine 140). At serine 141 the chain carries Phosphoserine; by NUAK1. The segment at 147–159 (HSKRRLVFCKRKP) is interaction with TRIM39.

Belongs to the CDI family. In terms of assembly, interacts with HDAC1; the interaction is prevented by competitive binding of C10orf90/FATS to HDAC1 facilitating acetylation and protein stabilization of CDKN1A/p21. Interacts with MKRN1. Interacts with PSMA3. Interacts with PCNA. Component of the ternary complex, cyclin D-CDK4-CDKN1A. Interacts (via its N-terminal domain) with CDK4; the interaction promotes the assembly of the cyclin D-CDK4 complex, its nuclear translocation and promotes the cyclin D-dependent enzyme activity of CDK4. Binding to CDK2 leads to CDK2/cyclin E inactivation at the G1-S phase DNA damage checkpoint, thereby arresting cells at the G1-S transition during DNA repair. Interacts with PIM1. Interacts with STK11. Interacts with NUAK1. Interacts with DTL and TRIM39. Interacts with PKP3; the interaction sequesters CDKN1A to the cytoplasm thereby repressing its role as an inhibitor of CDK4- and CDK6-driven RB1 phosphorylation. In terms of processing, phosphorylation of Thr-140 or Ser-141 impairs binding to PCNA. Phosphorylation at Ser-112 by GSK3-beta enhances ubiquitination by the DCX(DTL) complex. Phosphorylation of Thr-140 by PIM2 enhances its stability and inhibits cell proliferation. Phosphorylation of Thr-140 by PIM1 results in the relocation of CDKN1A to the cytoplasm and enhanced CDKN1A protein stability. UV radiation-induced phosphorylation at Ser-78 and Ser-141 by NUAK1 leads to its degradation. Ubiquitinated by MKRN1; leading to polyubiquitination and 26S proteasome-dependent degradation. Ubiquitinated by the DCX(DTL) complex, also named CRL4(CDT2) complex, leading to its degradation during S phase or following UV irradiation. Ubiquitination by the DCX(DTL) complex is essential to control replication licensing and is PCNA-dependent: interacts with PCNA via its PIP-box, while the presence of the containing the 'K+4' motif in the PIP box, recruit the DCX(DTL) complex, leading to its degradation. Ubiquitination at Ser-2 leads to degradation by the proteasome pathway. Ubiquitinated by RNF114; leading to proteasomal degradation. Post-translationally, acetylation leads to protein stability. Acetylated in vitro on Lys-136, Lys-149, Lys-156 and Lys-158. Deacetylation by HDAC1 is prevented by competitive binding of C10orf90/FATS to HDAC1. Expressed in keratinocytes (at protein level).

Its subcellular location is the cytoplasm. It is found in the nucleus. In terms of biological role, may be involved in p53/TP53 mediated inhibition of cellular proliferation in response to DNA damage. Binds to and inhibits cyclin-dependent kinase activity, preventing phosphorylation of critical cyclin-dependent kinase substrates and blocking cell cycle progression. Functions in the nuclear localization and assembly of cyclin D-CDK4 complex and promotes its kinase activity towards RB1. At higher stoichiometric ratios, inhibits the kinase activity of the cyclin D-CDK4 complex. Inhibits DNA synthesis by DNA polymerase delta by competing with POLD3 for PCNA binding. Plays an important role in controlling cell cycle progression and DNA damage-induced G2 arrest. Plays an important role in controlling cell cycle progression and DNA damage-induced G2 arrest. Involved in p53/TP53 mediated inhibition of cellular proliferation in response to DNA damage. Also involved in p53-independent DNA damage-induced G2 arrest mediated by CREB3L1 in astrocytes and osteoblasts. Binds to and inhibits cyclin-dependent kinase activity, preventing phosphorylation of critical cyclin-dependent kinase substrates and blocking cell cycle progression. Functions in the nuclear localization and assembly of cyclin D-CDK4 complex and promotes its kinase activity towards RB1. At higher stoichiometric ratios, inhibits the kinase activity of the cyclin D-CDK4 complex. Inhibits DNA synthesis by DNA polymerase delta by competing with POLD3 for PCNA binding. Negatively regulates the CDK4- and CDK6-driven phosphorylation of RB1 in keratinocytes, thereby resulting in the release of E2F1 and subsequent transcription of E2F1-driven G1/S phase promoting genes. This chain is Cyclin-dependent kinase inhibitor 1 (Cdkn1a), found in Mus musculus (Mouse).